We begin with the raw amino-acid sequence, 180 residues long: ATP synthase subunit delta (180 aa).

It belongs to the ATPase delta chain family. In terms of assembly, F-type ATPases have 2 components, F(1) - the catalytic core - and F(0) - the membrane proton channel. F(1) has five subunits: alpha(3), beta(3), gamma(1), delta(1), epsilon(1). CF(0) has four main subunits: a(1), b(1), b'(1) and c(10-14). The alpha and beta chains form an alternating ring which encloses part of the gamma chain. F(1) is attached to F(0) by a central stalk formed by the gamma and epsilon chains, while a peripheral stalk is formed by the delta, b and b' chains.

It is found in the cellular thylakoid membrane. Its function is as follows. F(1)F(0) ATP synthase produces ATP from ADP in the presence of a proton or sodium gradient. F-type ATPases consist of two structural domains, F(1) containing the extramembraneous catalytic core and F(0) containing the membrane proton channel, linked together by a central stalk and a peripheral stalk. During catalysis, ATP synthesis in the catalytic domain of F(1) is coupled via a rotary mechanism of the central stalk subunits to proton translocation. In terms of biological role, this protein is part of the stalk that links CF(0) to CF(1). It either transmits conformational changes from CF(0) to CF(1) or is implicated in proton conduction. The polypeptide is ATP synthase subunit delta (Prochlorococcus marinus (strain MIT 9215)).